The primary structure comprises 426 residues: Metacaspase-1B (426 aa).

The segment covering 1 to 14 (MSGYPGAGYNGGGY) has biased composition (gly residues). The segment at 1–111 (MSGYPGAGYN…QAPPPPPQAP (111 aa)) is disordered. Positions 21-68 (QYGGYYPPQPAYNAYQQPPPQQQQYMVYHQPSPGPQQHQHWNPQQQTP) are enriched in low complexity. Catalysis depends on residues His-217 and Cys-273.

It belongs to the peptidase C14B family.

Its function is as follows. Involved in cell death (apoptosis). The polypeptide is Metacaspase-1B (casB) (Neurospora crassa (strain ATCC 24698 / 74-OR23-1A / CBS 708.71 / DSM 1257 / FGSC 987)).